The primary structure comprises 501 residues: Cobyric acid synthase (501 aa).

A GATase cobBQ-type domain is found at 253 to 450 (EIEIAVLKLP…LHGIFENGRW (198 aa)). C334 functions as the Nucleophile in the catalytic mechanism. H442 is an active-site residue.

The protein belongs to the CobB/CobQ family. CobQ subfamily.

The protein operates within cofactor biosynthesis; adenosylcobalamin biosynthesis. In terms of biological role, catalyzes amidations at positions B, D, E, and G on adenosylcobyrinic A,C-diamide. NH(2) groups are provided by glutamine, and one molecule of ATP is hydrogenolyzed for each amidation. This Prochlorococcus marinus (strain MIT 9313) protein is Cobyric acid synthase.